A 173-amino-acid polypeptide reads, in one-letter code: MVFNVYYNGYYVEKKFSKEFLIHIAPDLKNSVDWNGSTRKQLRVLDKRAYRQVLHCNGRYYWPDGTKFVSHPYNKSIRTHSATVKRTDSSHRLKSHVVDKRPRRSLDSPRLDGYVLASSPIPHSDWNEELKLYAQSHGYDDYDDNLEDGEIDERDSLKSLNNHLDDLNVLEKQ.

A disordered region spans residues His80–Asp107. The segment covering Lys85–Asp107 has biased composition (basic and acidic residues).

This is an uncharacterized protein from Autographa californica nuclear polyhedrosis virus (AcMNPV).